A 278-amino-acid polypeptide reads, in one-letter code: Large ribosomal subunit protein uL2 (278 aa).

Composition is skewed to basic residues over residues 210-219 (RSRWLGKRPQ) and 252-263 (KKSRGIKTRNSK). The tract at residues 210-278 (RSRWLGKRPQ…LIIRHRKGNK (69 aa)) is disordered.

The protein belongs to the universal ribosomal protein uL2 family. As to quaternary structure, part of the 50S ribosomal subunit. Forms a bridge to the 30S subunit in the 70S ribosome.

Its function is as follows. One of the primary rRNA binding proteins. Required for association of the 30S and 50S subunits to form the 70S ribosome, for tRNA binding and peptide bond formation. It has been suggested to have peptidyltransferase activity; this is somewhat controversial. Makes several contacts with the 16S rRNA in the 70S ribosome. The chain is Large ribosomal subunit protein uL2 from Lactobacillus johnsonii (strain CNCM I-12250 / La1 / NCC 533).